Here is a 170-residue protein sequence, read N- to C-terminus: NADH-quinone oxidoreductase subunit J (170 aa).

Transmembrane regions (helical) follow at residues 1–21, 30–50, 56–76, 94–114, and 138–158; these read MEFV…FVII, VYLI…GAFF, VIIY…MLNI, IGPS…IFFL, and VFLV…IFHI.

This sequence belongs to the complex I subunit 6 family. In terms of assembly, composed of 13 different subunits. Subunits NuoA, H, J, K, L, M, N constitute the membrane sector of the complex.

It is found in the cell membrane. The catalysed reaction is a quinone + NADH + 5 H(+)(in) = a quinol + NAD(+) + 4 H(+)(out). NDH-1 shuttles electrons from NADH, via FMN and iron-sulfur (Fe-S) centers, to quinones in the respiratory chain. Couples the redox reaction to proton translocation (for every two electrons transferred, four hydrogen ions are translocated across the cytoplasmic membrane), and thus conserves the redox energy in a proton gradient. This Buchnera aphidicola subsp. Acyrthosiphon pisum (strain APS) (Acyrthosiphon pisum symbiotic bacterium) protein is NADH-quinone oxidoreductase subunit J (nuoJ).